The chain runs to 406 residues: 4-hydroxy-3-methylbut-2-enyl diphosphate reductase (406 aa).

[4Fe-4S] cluster is bound at residue Cys66. His96 contributes to the (2E)-4-hydroxy-3-methylbut-2-enyl diphosphate binding site. His96 serves as a coordination point for dimethylallyl diphosphate. His96 contacts isopentenyl diphosphate. Residue Cys157 coordinates [4Fe-4S] cluster. His185 serves as a coordination point for (2E)-4-hydroxy-3-methylbut-2-enyl diphosphate. His185 is a binding site for dimethylallyl diphosphate. His185 is a binding site for isopentenyl diphosphate. Glu187 functions as the Proton donor in the catalytic mechanism. Residue Thr250 participates in (2E)-4-hydroxy-3-methylbut-2-enyl diphosphate binding. Cys288 lines the [4Fe-4S] cluster pocket. 4 residues coordinate (2E)-4-hydroxy-3-methylbut-2-enyl diphosphate: Ser317, Ser318, Asn319, and Ser379. The dimethylallyl diphosphate site is built by Ser317, Ser318, Asn319, and Ser379. 4 residues coordinate isopentenyl diphosphate: Ser317, Ser318, Asn319, and Ser379.

It belongs to the IspH family. It depends on [4Fe-4S] cluster as a cofactor.

It catalyses the reaction isopentenyl diphosphate + 2 oxidized [2Fe-2S]-[ferredoxin] + H2O = (2E)-4-hydroxy-3-methylbut-2-enyl diphosphate + 2 reduced [2Fe-2S]-[ferredoxin] + 2 H(+). The catalysed reaction is dimethylallyl diphosphate + 2 oxidized [2Fe-2S]-[ferredoxin] + H2O = (2E)-4-hydroxy-3-methylbut-2-enyl diphosphate + 2 reduced [2Fe-2S]-[ferredoxin] + 2 H(+). It participates in isoprenoid biosynthesis; dimethylallyl diphosphate biosynthesis; dimethylallyl diphosphate from (2E)-4-hydroxy-3-methylbutenyl diphosphate: step 1/1. The protein operates within isoprenoid biosynthesis; isopentenyl diphosphate biosynthesis via DXP pathway; isopentenyl diphosphate from 1-deoxy-D-xylulose 5-phosphate: step 6/6. Functionally, catalyzes the conversion of 1-hydroxy-2-methyl-2-(E)-butenyl 4-diphosphate (HMBPP) into a mixture of isopentenyl diphosphate (IPP) and dimethylallyl diphosphate (DMAPP). Acts in the terminal step of the DOXP/MEP pathway for isoprenoid precursor biosynthesis. The protein is 4-hydroxy-3-methylbut-2-enyl diphosphate reductase of Synechococcus sp. (strain RCC307).